Reading from the N-terminus, the 91-residue chain is Acylphosphatase (91 aa).

An Acylphosphatase-like domain is found at 3–91; sequence KLRMNVQGRV…EETEQFKVIQ (89 aa). Active-site residues include arginine 18 and asparagine 36.

The protein belongs to the acylphosphatase family.

It carries out the reaction an acyl phosphate + H2O = a carboxylate + phosphate + H(+). This Enterococcus faecalis (strain ATCC 700802 / V583) protein is Acylphosphatase (acyP).